Here is a 298-residue protein sequence, read N- to C-terminus: Lipoyl synthase (298 aa).

The [4Fe-4S] cluster site is built by Cys43, Cys48, Cys54, Cys69, Cys73, Cys76, and Ser280. Residues 55–269 (FSSGTATFLI…AACGRGMGIP (215 aa)) enclose the Radical SAM core domain.

It belongs to the radical SAM superfamily. Lipoyl synthase family. [4Fe-4S] cluster is required as a cofactor.

The protein resides in the cytoplasm. The catalysed reaction is [[Fe-S] cluster scaffold protein carrying a second [4Fe-4S](2+) cluster] + N(6)-octanoyl-L-lysyl-[protein] + 2 oxidized [2Fe-2S]-[ferredoxin] + 2 S-adenosyl-L-methionine + 4 H(+) = [[Fe-S] cluster scaffold protein] + N(6)-[(R)-dihydrolipoyl]-L-lysyl-[protein] + 4 Fe(3+) + 2 hydrogen sulfide + 2 5'-deoxyadenosine + 2 L-methionine + 2 reduced [2Fe-2S]-[ferredoxin]. Its pathway is protein modification; protein lipoylation via endogenous pathway; protein N(6)-(lipoyl)lysine from octanoyl-[acyl-carrier-protein]: step 2/2. Catalyzes the radical-mediated insertion of two sulfur atoms into the C-6 and C-8 positions of the octanoyl moiety bound to the lipoyl domains of lipoate-dependent enzymes, thereby converting the octanoylated domains into lipoylated derivatives. In Nitratidesulfovibrio vulgaris (strain ATCC 29579 / DSM 644 / CCUG 34227 / NCIMB 8303 / VKM B-1760 / Hildenborough) (Desulfovibrio vulgaris), this protein is Lipoyl synthase.